Consider the following 95-residue polypeptide: UPF0473 protein ABC1595 (95 aa).

This sequence belongs to the UPF0473 family.

The sequence is that of UPF0473 protein ABC1595 from Shouchella clausii (strain KSM-K16) (Alkalihalobacillus clausii).